The sequence spans 463 residues: Asparagine--tRNA ligase (463 aa).

The protein belongs to the class-II aminoacyl-tRNA synthetase family. In terms of assembly, homodimer.

The protein resides in the cytoplasm. It catalyses the reaction tRNA(Asn) + L-asparagine + ATP = L-asparaginyl-tRNA(Asn) + AMP + diphosphate + H(+). This chain is Asparagine--tRNA ligase, found in Clostridium acetobutylicum (strain ATCC 824 / DSM 792 / JCM 1419 / IAM 19013 / LMG 5710 / NBRC 13948 / NRRL B-527 / VKM B-1787 / 2291 / W).